The following is an 873-amino-acid chain: Polyribonucleotide nucleotidyltransferase (873 aa).

Residues D521 and D527 each contribute to the Mg(2+) site. One can recognise a KH domain in the interval 587 to 646 (PRIITTTVPVDKIGEVIGPKGKMINQIQEDTGAEIAIEDDGTVYISSEGGEAAEKAKQII). Positions 658–730 (GETYKGTVVK…DRGKISLAIP (73 aa)) constitute an S1 motif domain. Residues 727–873 (LAIPGFENQE…VRRDFDPFDD (147 aa)) are disordered. Over residues 742–857 (RRSDDRPRRD…EYREGREVRH (116 aa)) the composition is skewed to basic and acidic residues.

The protein belongs to the polyribonucleotide nucleotidyltransferase family. It depends on Mg(2+) as a cofactor.

It is found in the cytoplasm. The enzyme catalyses RNA(n+1) + phosphate = RNA(n) + a ribonucleoside 5'-diphosphate. Functionally, involved in mRNA degradation. Catalyzes the phosphorolysis of single-stranded polyribonucleotides processively in the 3'- to 5'-direction. In Bifidobacterium animalis subsp. lactis (strain AD011), this protein is Polyribonucleotide nucleotidyltransferase.